The chain runs to 273 residues: Large ribosomal subunit protein uL2 (273 aa).

The tract at residues 221-273 (RGTAMNPVDHPHGGGEGRNFGKHPVSPWGVQTKGKKTRHNKRTDKYIVRRRGK) is disordered. Basic residues predominate over residues 253-273 (KGKKTRHNKRTDKYIVRRRGK).

This sequence belongs to the universal ribosomal protein uL2 family. In terms of assembly, part of the 50S ribosomal subunit. Forms a bridge to the 30S subunit in the 70S ribosome.

Its function is as follows. One of the primary rRNA binding proteins. Required for association of the 30S and 50S subunits to form the 70S ribosome, for tRNA binding and peptide bond formation. It has been suggested to have peptidyltransferase activity; this is somewhat controversial. Makes several contacts with the 16S rRNA in the 70S ribosome. The polypeptide is Large ribosomal subunit protein uL2 (Mannheimia succiniciproducens (strain KCTC 0769BP / MBEL55E)).